The primary structure comprises 126 residues: Glycine cleavage system H protein (126 aa).

The 83-residue stretch at 24–106 (TVTVGITDHA…YGEGWMYRIK (83 aa)) folds into the Lipoyl-binding domain. An N6-lipoyllysine modification is found at lysine 65.

This sequence belongs to the GcvH family. In terms of assembly, the glycine cleavage system is composed of four proteins: P, T, L and H. The cofactor is (R)-lipoate.

Its function is as follows. The glycine cleavage system catalyzes the degradation of glycine. The H protein shuttles the methylamine group of glycine from the P protein to the T protein. The chain is Glycine cleavage system H protein from Psychrobacter sp. (strain PRwf-1).